We begin with the raw amino-acid sequence, 304 residues long: Acetyl-coenzyme A carboxylase carboxyl transferase subunit beta (304 aa).

Residues 23-292 (VWTKCDSCGQ…PNPEAPREGV (270 aa)) form the CoA carboxyltransferase N-terminal domain. Positions 27, 30, 46, and 49 each coordinate Zn(2+). The C4-type zinc-finger motif lies at 27–49 (CDSCGQVLYRAELERNLEVCPKC). Positions 284–304 (NPEAPREGVVVPPVPDQEPEA) are disordered. The segment covering 295-304 (PPVPDQEPEA) has biased composition (pro residues).

It belongs to the AccD/PCCB family. As to quaternary structure, acetyl-CoA carboxylase is a heterohexamer composed of biotin carboxyl carrier protein (AccB), biotin carboxylase (AccC) and two subunits each of ACCase subunit alpha (AccA) and ACCase subunit beta (AccD). It depends on Zn(2+) as a cofactor.

It is found in the cytoplasm. It catalyses the reaction N(6)-carboxybiotinyl-L-lysyl-[protein] + acetyl-CoA = N(6)-biotinyl-L-lysyl-[protein] + malonyl-CoA. It participates in lipid metabolism; malonyl-CoA biosynthesis; malonyl-CoA from acetyl-CoA: step 1/1. Component of the acetyl coenzyme A carboxylase (ACC) complex. Biotin carboxylase (BC) catalyzes the carboxylation of biotin on its carrier protein (BCCP) and then the CO(2) group is transferred by the transcarboxylase to acetyl-CoA to form malonyl-CoA. The polypeptide is Acetyl-coenzyme A carboxylase carboxyl transferase subunit beta (Shigella boydii serotype 18 (strain CDC 3083-94 / BS512)).